Consider the following 24-residue polypeptide: Brevinin-1BYc (24 aa).

Cys18 and Cys24 form a disulfide bridge.

Expressed by the skin glands.

The protein localises to the secreted. Its function is as follows. Antibacterial activity against Gram-positive bacterium S.aureus. Weak antifungal activity against C.albicans. In Rana boylii (Foothill yellow-legged frog), this protein is Brevinin-1BYc.